The chain runs to 352 residues: Small ribosomal subunit biogenesis GTPase RsgA 2 (352 aa).

The region spanning 100–257 (RQDGQIIATN…VIDTPGMREL (158 aa)) is the CP-type G domain. Residues 147–150 (TKAD) and 199–207 (GSSGVGKST) each bind GTP. Zn(2+) contacts are provided by Cys-278, Cys-283, His-285, and Cys-291.

It belongs to the TRAFAC class YlqF/YawG GTPase family. RsgA subfamily. As to quaternary structure, monomer. Associates with 30S ribosomal subunit, binds 16S rRNA. Requires Zn(2+) as cofactor.

The protein localises to the cytoplasm. Functionally, one of several proteins that assist in the late maturation steps of the functional core of the 30S ribosomal subunit. Helps release RbfA from mature subunits. May play a role in the assembly of ribosomal proteins into the subunit. Circularly permuted GTPase that catalyzes slow GTP hydrolysis, GTPase activity is stimulated by the 30S ribosomal subunit. In Lactiplantibacillus plantarum (strain ATCC BAA-793 / NCIMB 8826 / WCFS1) (Lactobacillus plantarum), this protein is Small ribosomal subunit biogenesis GTPase RsgA 2.